Consider the following 175-residue polypeptide: Large ribosomal subunit protein uL10 (175 aa).

It belongs to the universal ribosomal protein uL10 family. Part of the ribosomal stalk of the 50S ribosomal subunit. The N-terminus interacts with L11 and the large rRNA to form the base of the stalk. The C-terminus forms an elongated spine to which L12 dimers bind in a sequential fashion forming a multimeric L10(L12)X complex.

In terms of biological role, forms part of the ribosomal stalk, playing a central role in the interaction of the ribosome with GTP-bound translation factors. This chain is Large ribosomal subunit protein uL10, found in Synechococcus sp. (strain CC9902).